The primary structure comprises 134 residues: Small ribosomal subunit protein bS6 (134 aa).

The disordered stretch occupies residues 97-134; the sequence is TDVSPIKASEGREDRRSAPQREERNHDNSDEVSEESED. Over residues 105–125 the composition is skewed to basic and acidic residues; it reads SEGREDRRSAPQREERNHDNS.

This sequence belongs to the bacterial ribosomal protein bS6 family.

In terms of biological role, binds together with bS18 to 16S ribosomal RNA. The polypeptide is Small ribosomal subunit protein bS6 (Marinomonas sp. (strain MWYL1)).